The primary structure comprises 85 residues: Large ribosomal subunit protein bL27 (85 aa).

This sequence belongs to the bacterial ribosomal protein bL27 family.

This is Large ribosomal subunit protein bL27 from Variovorax paradoxus (strain S110).